A 348-amino-acid chain; its full sequence is Phospho-N-acetylmuramoyl-pentapeptide-transferase (348 aa).

The next 10 helical transmembrane spans lie at 11 to 31 (SWML…IFLG), 68 to 88 (AGGI…LPLG), 92 to 112 (TWLF…DDII), 128 to 148 (FVIQ…IYKG), 165 to 185 (VGHS…TIVG), 196 to 216 (LDGL…VVAL), 222 to 242 (PLAQ…FAFL), 251 to 271 (VFMG…CAVM), 276 to 296 (LLLI…ILQV), and 326 to 346 (VVAR…IAAL).

It belongs to the glycosyltransferase 4 family. MraY subfamily. Mg(2+) is required as a cofactor.

It localises to the cell inner membrane. It carries out the reaction UDP-N-acetyl-alpha-D-muramoyl-L-alanyl-gamma-D-glutamyl-meso-2,6-diaminopimeloyl-D-alanyl-D-alanine + di-trans,octa-cis-undecaprenyl phosphate = di-trans,octa-cis-undecaprenyl diphospho-N-acetyl-alpha-D-muramoyl-L-alanyl-D-glutamyl-meso-2,6-diaminopimeloyl-D-alanyl-D-alanine + UMP. The protein operates within cell wall biogenesis; peptidoglycan biosynthesis. Catalyzes the initial step of the lipid cycle reactions in the biosynthesis of the cell wall peptidoglycan: transfers peptidoglycan precursor phospho-MurNAc-pentapeptide from UDP-MurNAc-pentapeptide onto the lipid carrier undecaprenyl phosphate, yielding undecaprenyl-pyrophosphoryl-MurNAc-pentapeptide, known as lipid I. In Chlamydia caviae (strain ATCC VR-813 / DSM 19441 / 03DC25 / GPIC) (Chlamydophila caviae), this protein is Phospho-N-acetylmuramoyl-pentapeptide-transferase.